Here is a 190-residue protein sequence, read N- to C-terminus: UPF0200 protein OE_4442F (190 aa).

8 to 15 lines the ATP pocket; it reads GMPGSGKS. The disordered stretch occupies residues 120–144; that stretch reads ARIEDRDRPGDTDGEPLDAREDRER.

Belongs to the UPF0200 family.

This chain is UPF0200 protein OE_4442F, found in Halobacterium salinarum (strain ATCC 29341 / DSM 671 / R1).